Reading from the N-terminus, the 210-residue chain is 3-hexulose-6-phosphate synthase (210 aa).

The protein belongs to the HPS/KGPDC family. HPS subfamily.

The catalysed reaction is D-ribulose 5-phosphate + formaldehyde = D-arabino-hex-3-ulose 6-phosphate. Its pathway is one-carbon metabolism; formaldehyde assimilation via RuMP pathway; D-fructose 6-phosphate from D-ribulose 5-phosphate and formaldehyde: step 1/2. Functionally, catalyzes the condensation of ribulose 5-phosphate with formaldehyde to form 3-hexulose 6-phosphate. This Staphylococcus epidermidis (strain ATCC 35984 / DSM 28319 / BCRC 17069 / CCUG 31568 / BM 3577 / RP62A) protein is 3-hexulose-6-phosphate synthase.